A 264-amino-acid polypeptide reads, in one-letter code: H-2 class II histocompatibility antigen, E-B beta chain (264 aa).

An N-terminal signal peptide occupies residues 1-26 (MVWLPRVPCVAAVILLLTVLSPPMAL). Residues 27 to 121 (VRDSRPWFLE…ISDKFLVRRR (95 aa)) are beta-1. Topologically, residues 27 to 225 (VRDSRPWFLE…KAQSTSAQNK (199 aa)) are extracellular. Cystine bridges form between Cys38–Cys106 and Cys144–Cys200. An N-linked (GlcNAc...) asparagine glycan is attached at Asn46. The beta-2 stretch occupies residues 122–225 (VEPTVTVYPT…KAQSTSAQNK (104 aa)). Residues 124 to 214 (PTVTVYPTKT…PSLTDPVTVE (91 aa)) enclose the Ig-like C1-type domain. A helical membrane pass occupies residues 226–246 (MLSGVGGFVLGLLFLGAGLFI). The Cytoplasmic segment spans residues 247–264 (YFRNQKGQSGLQPTGLLS).

The protein belongs to the MHC class II family. Ubiquitinated in immature dendritic cells leading to down-regulation of MHC class II.

Its subcellular location is the membrane. This is H-2 class II histocompatibility antigen, E-B beta chain (H2-Eb1) from Mus musculus (Mouse).